The sequence spans 105 residues: uncharacterized protein (105 aa).

This is an uncharacterized protein from Schizosaccharomyces pombe (strain 972 / ATCC 24843) (Fission yeast).